The chain runs to 177 residues: Adenylate kinase (177 aa).

13–18 (GCGKGT) is a binding site for ATP. An NMP region spans residues 33-62 (SSGDIIREEMKKSSKEATVIREMVNSGRLA). AMP contacts are provided by residues Ser-34, Arg-39, 60-62 (RLA), 85-88 (GYPR), and Gln-92. An LID region spans residues 119–127 (GRNEGRDDD). Arg-120 provides a ligand contact to ATP. AMP-binding residues include Arg-124 and Arg-135.

It belongs to the adenylate kinase family. In terms of assembly, monomer.

It is found in the cytoplasm. The catalysed reaction is AMP + ATP = 2 ADP. Its function is as follows. Catalyzes the reversible transfer of the terminal phosphate group between ATP and AMP. Plays an important role in cellular energy homeostasis and in adenine nucleotide metabolism. The polypeptide is Adenylate kinase (Encephalitozoon cuniculi (strain GB-M1) (Microsporidian parasite)).